We begin with the raw amino-acid sequence, 151 residues long: uncharacterized protein (151 aa).

Positions 48 to 151 are disordered; the sequence is RPPGWQPPVN…SKFDHTRKKF (104 aa). Over residues 55-77 the composition is skewed to polar residues; sequence PVNTGPTSPVSINASNAAPSNLK. Low complexity-rich tracts occupy residues 85–105 and 123–141; these read PRRL…RLPS and KSPS…SLLR.

This is an uncharacterized protein from Schizosaccharomyces pombe (strain 972 / ATCC 24843) (Fission yeast).